Reading from the N-terminus, the 474-residue chain is Pyruvate kinase (474 aa).

Arg37 serves as a coordination point for substrate. Residues Asn39, Ser41, and Asp71 each contribute to the K(+) site. 39 to 42 (NFSH) lines the ATP pocket. Residues Arg78 and Lys160 each contribute to the ATP site. Mg(2+) is bound at residue Glu222. 3 residues coordinate substrate: Gly245, Asp246, and Thr278. Asp246 provides a ligand contact to Mg(2+).

The protein belongs to the pyruvate kinase family. Homotetramer. Requires Mg(2+) as cofactor. K(+) is required as a cofactor.

The catalysed reaction is pyruvate + ATP = phosphoenolpyruvate + ADP + H(+). It functions in the pathway carbohydrate degradation; glycolysis; pyruvate from D-glyceraldehyde 3-phosphate: step 5/5. This is Pyruvate kinase (ttuE) from Agrobacterium vitis (Rhizobium vitis).